Here is a 329-residue protein sequence, read N- to C-terminus: METLFSGIQPSGIPTIGNYIGALKQFVDVQNDYDCYFCIVDQHAITMPQDRLKLRKQTRQLAAIYLASGIDPDKATLFIQSEVPAHVQAGWMLTTIASVGELERMTQYKDKAQKAVEGIPAGLLTYPPLMAADIVLYNTNIVPVGDDQKQHIELTRNLVDRFNSRYNDVLVKPEIRMPKVGGRVMSLQDPTRKMSKSDDNAKNFISLLDEPNVAAKKIKSAVTDSDGIIKFDRDNKPGITNLISIYAGLTDMPIKDIEAKYEGEGYGKFKGDLAEIVKAFLVEFQEKYESFYNSDKLDDILDQGRDKAHKVSFKTVKKMEKAMGLGRKR.

ATP-binding positions include 9–11 (QPS) and 17–18 (GN). The short motif at 10-18 (PSGIPTIGN) is the 'HIGH' region element. Asp133 contacts L-tryptophan. ATP contacts are provided by residues 145-147 (GDD), Val184, and 193-197 (KMSKS). A 'KMSKS' region motif is present at residues 193-197 (KMSKS).

The protein belongs to the class-I aminoacyl-tRNA synthetase family. As to quaternary structure, homodimer.

Its subcellular location is the cytoplasm. The enzyme catalyses tRNA(Trp) + L-tryptophan + ATP = L-tryptophyl-tRNA(Trp) + AMP + diphosphate + H(+). Catalyzes the attachment of tryptophan to tRNA(Trp). The protein is Tryptophan--tRNA ligase of Staphylococcus aureus (strain MSSA476).